The chain runs to 305 residues: MNSLVGDVPQSLSSLDDTTTCYNLDASCNKSLVEERPSKILKTTHISPNLHPFSSSNPPPPKHQPSSRILSFEKTGLHVMNHNSPNLIFSPKDEEIGLPEHKKAELIIRGTKRAQSLTRSQSNAQDHILAERKRREKLTQRFVALSALIPGLKKMDKASVLGDAIKHIKYLQESVKEYEEQKKEKTMESVVLVKKSSLVLDENHQPSSSSSSDGNRNSSSSNLPEIEVRVSGKDVLIKILCEKQKGNVIKIMGEIEKLGLSITNSNVLPFGPTFDISIIAQKNNNFDMKIEDVVKNLSFGLSKLT.

The segment at 41–67 is disordered; it reads LKTTHISPNLHPFSSSNPPPPKHQPSS. A compositionally biased stretch (polar residues) spans 44-56; that stretch reads THISPNLHPFSSS. The bHLH domain occupies 122–171; it reads SNAQDHILAERKRREKLTQRFVALSALIPGLKKMDKASVLGDAIKHIKYL. Positions 201-224 are disordered; the sequence is DENHQPSSSSSSDGNRNSSSSNLP. Low complexity predominate over residues 207–222; it reads SSSSSSDGNRNSSSSN.

As to quaternary structure, homodimer. As to expression, expressed in roots.

The protein localises to the nucleus. This Arabidopsis thaliana (Mouse-ear cress) protein is Transcription factor bHLH18 (BHLH18).